The primary structure comprises 138 residues: Ribosomal RNA large subunit methyltransferase H (138 aa).

Residues L57, G86, and 105 to 110 each bind S-adenosyl-L-methionine; that span reads LSPLTF.

This sequence belongs to the RNA methyltransferase RlmH family. Homodimer.

Its subcellular location is the cytoplasm. It catalyses the reaction pseudouridine(1915) in 23S rRNA + S-adenosyl-L-methionine = N(3)-methylpseudouridine(1915) in 23S rRNA + S-adenosyl-L-homocysteine + H(+). Its function is as follows. Specifically methylates the pseudouridine at position 1915 (m3Psi1915) in 23S rRNA. This Prochlorococcus marinus (strain MIT 9301) protein is Ribosomal RNA large subunit methyltransferase H.